The following is an 807-amino-acid chain: Leucine--tRNA ligase (807 aa).

A 'HIGH' region motif is present at residues 38–49 (PYPSGSGLHVGH). Residues 579–583 (KMSKS) carry the 'KMSKS' region motif. K582 contributes to the ATP binding site.

This sequence belongs to the class-I aminoacyl-tRNA synthetase family.

The protein resides in the cytoplasm. It carries out the reaction tRNA(Leu) + L-leucine + ATP = L-leucyl-tRNA(Leu) + AMP + diphosphate. The polypeptide is Leucine--tRNA ligase (Mycoplasmopsis pulmonis (strain UAB CTIP) (Mycoplasma pulmonis)).